The chain runs to 441 residues: Lysine histidine transporter 2 (441 aa).

The Cytoplasmic portion of the chain corresponds to 1-32 (MGNSEMSASEVAAAKQKNVDDWLPITSSRNAK). The chain crosses the membrane as a helical span at residues 33-53 (WWYSAFHNVTAMVGAGVLSLP). Topologically, residues 54–58 (YAMSN) are extracellular. A helical membrane pass occupies residues 59-79 (LGWGPGVTIMVMSWIITLYTL). Topologically, residues 80 to 110 (WQMVEMHEIVPGKRLDRYHELGQHAFGEKLG) are cytoplasmic. The chain crosses the membrane as a helical span at residues 111-131 (LWIVVPQQLIVEVGVDIVYMV). Residues 132–152 (TGGASLKKVHQLVCPDCKEIR) lie on the Extracellular side of the membrane. The chain crosses the membrane as a helical span at residues 153 to 173 (TTFWIMIFASVHFVISHLPNF). At 174–175 (NS) the chain is on the cytoplasmic side. The helical transmembrane segment at 176 to 196 (ISIISLAAAVMSLTYSTIAWA) threads the bilayer. At 197–222 (ASVHKGVHPDVDYSPRASTDVGKVFN) the chain is on the extracellular side. A helical membrane pass occupies residues 223 to 243 (FLNALGDVAFAYAGHNVVLEI). The Cytoplasmic portion of the chain corresponds to 244–263 (QATIPSTPEMPSKVPMWRGV). A helical membrane pass occupies residues 264 to 284 (IVAYIVVAICYFPVAFLGYYI). The Extracellular segment spans residues 285-300 (FGNSVDDNILITLEKP). A helical membrane pass occupies residues 301–321 (IWLIAMANMFVVIHVIGSYQI). Residues 322–347 (FAMPVFDMLETVLVKKMNFNPSFKLR) are Cytoplasmic-facing. Residues 348–370 (FITRSLYVAFTMIVAICVPFFGG) traverse the membrane as a helical segment. The Extracellular portion of the chain corresponds to 371 to 373 (LLG). A helical transmembrane segment spans residues 374–396 (FFGGFAFAPTTYYLPCIMWLVLK). Topologically, residues 397 to 406 (KPKRFGLSWT) are cytoplasmic. A helical transmembrane segment spans residues 407-427 (ANWFCIIVGVLLTILAPIGGL). The Extracellular portion of the chain corresponds to 428 to 441 (RTIIINAKTYKFFS).

It belongs to the amino acid/polyamine transporter 2 family. Amino acid/auxin permease (AAAP) (TC 2.A.18.2) subfamily. In terms of tissue distribution, expressed in flower buds and to lower levels in leaves and stems. Not detected in roots and siliques. Restricted to the tapetum cell layer.

It is found in the cell membrane. With respect to regulation, inhibited by diethylstibestrol (DES), 2,4-dinitrophenol (DNP) and carbonlycyanide m-chlorophenylhydrazone (CCCP). Amino acid-proton symporter. Transporter with a broad specificity for neutral and acidic amino acids. Basic amino acids are only marginally transported. Involved in import of amino acids into the tapetum cells for synthesis of compounds important for microspore structure. The sequence is that of Lysine histidine transporter 2 (LHT2) from Arabidopsis thaliana (Mouse-ear cress).